The chain runs to 57 residues: Large ribosomal subunit protein bL32 (57 aa).

Basic residues predominate over residues 1-19 (MATPKRRMSRANTRSRRAQ). The segment at 1-20 (MATPKRRMSRANTRSRRAQW) is disordered.

The protein belongs to the bacterial ribosomal protein bL32 family.

This chain is Large ribosomal subunit protein bL32, found in Mycobacterium leprae (strain Br4923).